We begin with the raw amino-acid sequence, 268 residues long: Orotidine 5'-phosphate decarboxylase (268 aa).

Substrate is bound by residues aspartate 38, 60-62 (KTH), 92-101 (DRKFADIGNT), tyrosine 218, and arginine 236. Catalysis depends on lysine 94, which acts as the Proton donor.

Belongs to the OMP decarboxylase family.

It catalyses the reaction orotidine 5'-phosphate + H(+) = UMP + CO2. It participates in pyrimidine metabolism; UMP biosynthesis via de novo pathway; UMP from orotate: step 2/2. The polypeptide is Orotidine 5'-phosphate decarboxylase (URA3) (Candida parapsilosis (Yeast)).